The sequence spans 511 residues: MTMEINNTDPFEKMPLPDDSGLSGSGAFDDSKLAKLNGVISQGLNPYPYKFEKDEDICEILEKFEDFEKNEGLTVRTAGRLYNIRKHGKMIFADLGDQAGRVQVLVRKGNLPDEEFEIFKNLVDSGDIIGVQGDLFRTKRGENSISVSEFSLLSKSLCALPEKFHGLKDVETRYRKRYLDLIVNAEKREIFVMRSKLISEIRRFLTDREFLEFETPILQTVYGGANARPFTTFHNCLGQNLFLRIAPELYLKRLVVGGYEKVFEICKNFRNEDIDTTHNPEFTMIEVYEAYRDYNDMMDLTESLVSELVFKLTGSYEVQMGEKTINLRSPWKRISMEDALKEYAGLDIFAHSIEDLKKIAIENRIEDYEKAKSHGEFLALLFEGLVEDKLIDPTFIYDFPVENSPLAKNHREKAGFVERFELFLNGWELANGYSELNDPLEQEKRFEEQDKKRKLGDLEAQTVDYDFINALGYGLPPTGGMGLGIDRLTMILSGLESIKEVILFPQMKRED.

Positions 1–22 (MTMEINNTDPFEKMPLPDDSGL) are disordered. Glu421 and Glu428 together coordinate Mg(2+).

Belongs to the class-II aminoacyl-tRNA synthetase family. Homodimer. Mg(2+) serves as cofactor.

The protein localises to the cytoplasm. It catalyses the reaction tRNA(Lys) + L-lysine + ATP = L-lysyl-tRNA(Lys) + AMP + diphosphate. The sequence is that of Lysine--tRNA ligase 2 from Methanosarcina mazei (strain ATCC BAA-159 / DSM 3647 / Goe1 / Go1 / JCM 11833 / OCM 88) (Methanosarcina frisia).